Reading from the N-terminus, the 305-residue chain is Protoheme IX farnesyltransferase (305 aa).

The next 9 membrane-spanning stretches (helical) occupy residues 28-48 (VVLLMLLTAIVGMCLASPGIV), 52-72 (VFLFGNLGIALAASSAAAINH), 102-122 (IFAAILCILSMIILIAFVNLL), 123-143 (TALLTFITLIGYAGFYTLYLK), 150-170 (IVIGGLAGAAPPLLGWVAVTG), 176-196 (ALILLLIIFLWTPPHFWALAI), 221-241 (INILLYTLLLTAISFLPFVIM), 243-263 (SGWIYFSSVCLLNLGFLYWAI), and 282-302 (IWYLMLLFTALLVDHYVYLAL).

It belongs to the UbiA prenyltransferase family. Protoheme IX farnesyltransferase subfamily.

Its subcellular location is the cell inner membrane. It catalyses the reaction heme b + (2E,6E)-farnesyl diphosphate + H2O = Fe(II)-heme o + diphosphate. Its pathway is porphyrin-containing compound metabolism; heme O biosynthesis; heme O from protoheme: step 1/1. Converts heme B (protoheme IX) to heme O by substitution of the vinyl group on carbon 2 of heme B porphyrin ring with a hydroxyethyl farnesyl side group. This chain is Protoheme IX farnesyltransferase, found in Coxiella burnetii (strain CbuK_Q154) (Coxiella burnetii (strain Q154)).